The sequence spans 74 residues: Kappa-stichotoxin-Hmg1a (74 aa).

The first 22 residues, 1–22 (MKSQMIAAVLLIAFCLCVVVTA), serve as a signal peptide directing secretion. Positions 23 to 39 (RMELQDVEDMENGFQKR) are excised as a propeptide. In terms of domain architecture, ShKT spans 42–74 (CKDLIPVSECTDIRCRTSMKYRLNLCRKTCGSC). Cystine bridges form between Cys42–Cys74, Cys51–Cys67, and Cys56–Cys71.

Belongs to the sea anemone type 1 potassium channel toxin family. Type 1a subfamily.

It localises to the secreted. Its subcellular location is the nematocyst. In terms of biological role, potently blocks the voltage-gated potassium channel Kv1.1/KCNA1 (Ki=75 pM), KcsA (Ki~1 nM) and moderately blocks Kv1.2/KCNA2 (Ki=2.5 nM) and Kv1.3/KCNA3 (Ki=3.1 nM). Also facilitates acetylcholine release at the avian neuromuscular junction. Blockade and dissociation rate are sensitive to voltage. In Heteractis magnifica (Magnificent sea anemone), this protein is Kappa-stichotoxin-Hmg1a.